The following is a 439-amino-acid chain: MATGTDFFDQATIVVRAGNGGNGAATFRREKYVPRGGPNGGDGGRGGHVYLIADPEYNTLLHFRYQRKFVAENGGHGGKNAMHGRNGADVYVPVPPGTVVRATINGVTYTVDLARPGQRLLAARGGRGGLGNIHFTTPTRQAPRLAELGEPGQELTLELELKMLADVGLVGFPNAGKSTLLSVISAARPKIAAYPFTTLTPNLGIVEVGVQRFVVADIPGLIEGAHAGVGLGHDFLRHIERTRLLIHIIDAAGVDGRTPWDDYEQINTELRLYQPELAQRKQVVALNKADLPAAQANLPILRERLPVAPEDLFVISAATRAGIEPLLQRVAELLRADPPPQRDPVDPDEPPLEWPLPPVDENAFTVEREGDAFRVRGVKIERLIAMSNLEQDEAIDRIQRVLEASGINEALMAAGVQDGDVVRIGRAELVWDDSGQHAL.

The region spanning 5–164 is the Obg domain; sequence TDFFDQATIV…LTLELELKML (160 aa). The OBG-type G domain maps to 165–335; that stretch reads ADVGLVGFPN…LLQRVAELLR (171 aa). Residues 171–178, 196–200, 217–220, 287–290, and 316–318 contribute to the GTP site; these read GFPNAGKS, FTTLT, DIPG, NKAD, and SAA. Residues Ser178 and Thr198 each coordinate Mg(2+). A disordered region spans residues 337-359; sequence DPPPQRDPVDPDEPPLEWPLPPV. The OCT domain maps to 356-433; sequence LPPVDENAFT…IGRAELVWDD (78 aa).

The protein belongs to the TRAFAC class OBG-HflX-like GTPase superfamily. OBG GTPase family. Monomer. Mg(2+) is required as a cofactor.

It is found in the cytoplasm. In terms of biological role, an essential GTPase which binds GTP, GDP and possibly (p)ppGpp with moderate affinity, with high nucleotide exchange rates and a fairly low GTP hydrolysis rate. Plays a role in control of the cell cycle, stress response, ribosome biogenesis and in those bacteria that undergo differentiation, in morphogenesis control. This Chloroflexus aggregans (strain MD-66 / DSM 9485) protein is GTPase Obg.